The following is a 1070-amino-acid chain: MDSAPPSPSPSPAPAYAELHCLTNFSFQRGASHPEELVARAAEAGYTALAITDECSLAGVVRAHQQLRRLARPLKLLIGSELRLVDGLRVVLLATDRAAYGRLARLITIGRRAATKGRYQLTCADLDRGIPGCLALVVPPDDRILDAAALVADARWVGERFPDAAWLAVELACGPDDGRRLEALLAIASAAGLPPVAATGALMHDPSRRALADVLAALRLRVTIAEAGRALAPNAERALHERAVLARRYPAELLAETLRIVARCHFRLDELRYEYPAELVPDGETPASWLRRLVEDGLRWRHGRPQDDLAPPKVRAQVEHELALIAELGFEAYFLTVEDLVRFARGRGILCQGRGSAANSVICWALGITEVDPELGIMLVERFISKERDEPPDIDVDFEHERREEVIQYVYRKYGRERAALAATVIRYRARSALRDVGRALGLPPGQLERLARDRFWFDAGRIRPERLREAGFDPASPGVQRLATLTEALVGFPRHLSQHVGGFVIARGRLDELVPVENAAMPERTVIQWDKDDLDALGLLKIDVLALGMLSALRRSLALVSTWRGRPFTLADIPREAPEVYRMLSEADSIGVFQIESRAQMTMLPRLKPARFYDLVVQVAIVRPGPIQGGMVHPYLQARARIERDEPVSYPQPHCPDADADGTCVPRPDDVRRVLERTLGVPIFQEQVMQLAVVAAGFTPGEADQLRRAMGAFRRHGELERYRAKLLAGMAARGYRAEFAERLCDQIEGFGSYGFPESHAASFALLVYCSAWLKCCEPAAFLCGLLNSQPMGFYAPSQLIQDARRHGVVVLGAEVTASDWDCTLEALPDASPGAAPAVRLGLQLVKGFGREAAMRIVAARTERPFPNVDELALRARLDAAALKRLAEAGALEPLAGHRRQALWQAAAGHAPEGVLRGARIAEPRAELAAPSEAQELVADYARLGFTLGRHPLALLRAKLTTLRFVTAAEIRDYPDRKLARIAGLVTCRQRPGTAKGTLFLTVEDETGLANVIVQAELVERQRREVLGARLLGVFGQIRSKGQVVHLLAQRLVDHSALLGALEARSRDFQ.

Belongs to the DNA polymerase type-C family. DnaE2 subfamily.

The protein localises to the cytoplasm. The enzyme catalyses DNA(n) + a 2'-deoxyribonucleoside 5'-triphosphate = DNA(n+1) + diphosphate. In terms of biological role, DNA polymerase involved in damage-induced mutagenesis and translesion synthesis (TLS). It is not the major replicative DNA polymerase. This chain is Error-prone DNA polymerase, found in Aromatoleum aromaticum (strain DSM 19018 / LMG 30748 / EbN1) (Azoarcus sp. (strain EbN1)).